The primary structure comprises 431 residues: MDEAVGDLKQALPCVAEAPTVHVEVHQRSGSTAKKEDVKLNVRKLLNRHNIVFGDYTWTEFDEPFLTRNVQSVSIVDTELKVKDPQPIDLSTCTVALHVFQLNEGGPSSENLEEETENIIAANHWLLPAAEFHGLWDSLVYDAEVKSHLLDYVMTTLLFSDKNVDSNLITWNRVVLLHGPPGTGKTSLCKALAQKLTIRLSSRYRYGQLIEINSHSLFSKWFSESGKLVTRMFQMIQDLIDDKDALVFVLIDEVESLTAARNACRAGTEPSDAIRVVNAVLTQIDQIKRHSNVVILTTSNITERIDVAFVDRADIRQYVGPPSAAAIFKIYLSCLEELMKCQIIYPRQQLLTLRELEMIGFIENNVSKLSLLLSEISRKSEGLSGRVLRKLPFLAHALYIQAPTVTIEGFLQALSLAVDRQFEDRKKLSCV.

N-acetylmethionine is present on Met-1. 179-186 lines the ATP pocket; sequence GPPGTGKT.

It belongs to the AAA ATPase family. PCH2 subfamily. As to quaternary structure, specifically interacts with the ligand binding domain of the thyroid receptor (TR). This interaction does not require the presence of thyroid hormone for its interaction. Interacts with proteasome subunit PSMA8; to participate in meiosis progression during spermatogenesis.

Plays a key role in chromosome recombination and chromosome structure development during meiosis. Required at early steps in meiotic recombination that leads to non-crossovers pathways. Also needed for efficient completion of homologous synapsis by influencing crossover distribution along the chromosomes affecting both crossovers and non-crossovers pathways. Also required for development of higher-order chromosome structures and is needed for synaptonemal-complex formation. In males, required for efficient synapsis of the sex chromosomes and for sex body formation. Promotes early steps of the DNA double-strand breaks (DSBs) repair process upstream of the assembly of RAD51 complexes. Required for depletion of HORMAD1 and HORMAD2 from synapsed chromosomes. Plays a role in mitotic spindle assembly checkpoint (SAC) activation. The sequence is that of Pachytene checkpoint protein 2 homolog (TRIP13) from Sus scrofa (Pig).